We begin with the raw amino-acid sequence, 1453 residues long: NK-tumor recognition protein (1453 aa).

In terms of domain architecture, PPIase cyclophilin-type spans histidine 10–valine 175. Residues lysine 187 to lysine 625 form a disordered region. Over residues serine 195 to glutamate 213 the composition is skewed to low complexity. Residues isoleucine 221–lysine 240 show a composition bias toward basic residues. The span at tyrosine 259 to glutamate 286 shows a compositional bias: basic and acidic residues. Lysine 323 participates in a covalent cross-link: Glycyl lysine isopeptide (Lys-Gly) (interchain with G-Cter in SUMO2). The segment covering serine 329–arginine 348 has biased composition (basic residues). Serine 379, serine 401, and serine 416 each carry phosphoserine. Basic and acidic residues predominate over residues lysine 382 to leucine 402. A compositionally biased stretch (polar residues) spans serine 403–alanine 421. The segment covering aspartate 425–isoleucine 460 has biased composition (basic residues). The span at serine 514–glycine 531 shows a compositional bias: basic and acidic residues. Low complexity-rich tracts occupy residues serine 532 to leucine 546 and serine 554 to serine 565. Residues lysine 576 and lysine 579 each participate in a glycyl lysine isopeptide (Lys-Gly) (interchain with G-Cter in SUMO2) cross-link. Serine 611 bears the Phosphoserine mark. A Glycyl lysine isopeptide (Lys-Gly) (interchain with G-Cter in SUMO2) cross-link involves residue lysine 637. Serine 646 carries the phosphoserine modification. Over residues threonine 651–serine 661 the composition is skewed to polar residues. A disordered region spans residues threonine 651 to serine 1453. Residues lysine 654 and lysine 664 each participate in a glycyl lysine isopeptide (Lys-Gly) (interchain with G-Cter in SUMO2) cross-link. Composition is skewed to low complexity over residues arginine 682–serine 726 and serine 736–serine 749. A compositionally biased stretch (basic residues) spans alanine 755–arginine 772. Basic and acidic residues predominate over residues serine 773–lysine 789. The span at serine 799–serine 809 shows a compositional bias: low complexity. 2 stretches are compositionally biased toward basic and acidic residues: residues proline 820 to arginine 852 and lysine 859 to serine 868. Phosphoserine occurs at positions 880, 882, 884, and 900. Over residues aspartate 887–lysine 902 the composition is skewed to basic and acidic residues. Residues glutamate 903 to serine 913 are compositionally biased toward acidic residues. Low complexity predominate over residues serine 948 to serine 958. Positions glutamate 966–threonine 982 are enriched in basic and acidic residues. A compositionally biased stretch (basic residues) spans lysine 983–alanine 1005. The segment covering aspartate 1030 to lysine 1045 has biased composition (basic and acidic residues). 2 positions are modified to phosphoserine: serine 1139 and serine 1148. Positions glutamine 1170–leucine 1180 are enriched in polar residues. The segment covering serine 1189 to threonine 1199 has biased composition (low complexity). Serine 1195 carries the phosphoserine modification. Glycyl lysine isopeptide (Lys-Gly) (interchain with G-Cter in SUMO2) cross-links involve residues lysine 1208 and lysine 1249. The segment at arginine 1303–serine 1453 is arg/Ser tandem repeat-rich. The segment covering serine 1322–arginine 1346 has biased composition (low complexity). The segment covering histidine 1369–serine 1379 has biased composition (basic residues). The segment covering arginine 1380–arginine 1401 has biased composition (low complexity). Basic residues predominate over residues arginine 1416–serine 1426.

The protein resides in the cell membrane. It carries out the reaction [protein]-peptidylproline (omega=180) = [protein]-peptidylproline (omega=0). Inhibited by cyclosporin A (CsA). Its function is as follows. PPIase that catalyzes the cis-trans isomerization of proline imidic peptide bonds in oligopeptides and may therefore assist protein folding. Component of a putative tumor-recognition complex involved in the function of NK cells. The polypeptide is NK-tumor recognition protein (Mus musculus (Mouse)).